Here is a 202-residue protein sequence, read N- to C-terminus: S-modulin (202 aa).

Gly-2 carries N-myristoyl glycine lipidation. 4 consecutive EF-hand domains span residues 25-60, 61-96, 97-132, and 147-182; these read QEELCTWYQSFLKECPSGRISKKQFESIYSKFFPDA, DPKAYAQHVFRSFDANNDGTLDFKEYMIALMMTSSG, KANQKLEWAFCLYDVDGNGTINKKEVLEIITAIFKM, and TPEKRTNKIWVYFGKKDDDKLTEGEFIQGIVKNKEI. Ca(2+) is bound by residues Asp-74, Asn-76, Asp-78, Thr-80, Glu-85, Asp-110, Asp-112, Asn-114, Thr-116, and Glu-121.

The protein belongs to the recoverin family. The N-terminus is blocked.

Calcium-dependent regulator of light sensitivity of cGMP phosphodiesterase in rod outer segments. Controls rhodopsin phosphorylation in a Ca(2+)-dependent manner. The chain is S-modulin from Aquarana catesbeiana (American bullfrog).